The chain runs to 109 residues: Aquaporin-2 (109 aa).

The Cytoplasmic portion of the chain corresponds to 1–6; it reads SIAFSR. A helical membrane pass occupies residues 7–27; sequence AVLAEFLATLLFVFFGLGSAL. Residues 28–35 are Extracellular-facing; it reads NWPQAMPS. Residues 36-54 traverse the membrane as a helical segment; that stretch reads VLQIAMAFGLAIGTLVQAL. The Cytoplasmic portion of the chain corresponds to 55-59; sequence GHVSG. The segment at residues 60 to 69 is an intramembrane region (discontinuously helical); sequence AHINPAVTVA. The short motif at 63–65 is the NPA 1 element; that stretch reads NPA. Residues 70-80 are Cytoplasmic-facing; that stretch reads CLVGCHVSFLR. The helical transmembrane segment at 81–102 threads the bilayer; sequence AAFYVAAQLLGAVAGAALLHEI. Topologically, residues 103-109 are extracellular; that stretch reads TPPDIRR.

Belongs to the MIP/aquaporin (TC 1.A.8) family. Homotetramer. In terms of processing, serine phosphorylation is necessary and sufficient for expression at the apical membrane. Endocytosis is not phosphorylation-dependent. N-glycosylated.

The protein localises to the apical cell membrane. Its subcellular location is the basolateral cell membrane. The protein resides in the cell membrane. It is found in the cytoplasmic vesicle membrane. It localises to the golgi apparatus. The protein localises to the trans-Golgi network membrane. The catalysed reaction is H2O(in) = H2O(out). It carries out the reaction glycerol(in) = glycerol(out). Forms a water-specific channel that provides the plasma membranes of renal collecting duct with high permeability to water, thereby permitting water to move in the direction of an osmotic gradient. Plays an essential role in renal water homeostasis. Could also be permeable to glycerol. The sequence is that of Aquaporin-2 from Equus caballus (Horse).